Here is a 212-residue protein sequence, read N- to C-terminus: Floral homeotic protein PMADS 2 (212 aa).

The MADS-box domain maps to 3–58 (RGKIEIKRIENSSNRQVTYSKRRNGIIKKAKEITVLCDAKVSLIIFGNSGKMHEYC). A K-box domain is found at 84-170 (HENLSNEIDR…QYALHQKEMA (87 aa)).

As to expression, predominantly expressed in petals and stamens, less in carpels and sepals.

The protein resides in the nucleus. Functionally, transcription factor involved in the genetic control of flower development. The polypeptide is Floral homeotic protein PMADS 2 (PMADS2) (Petunia hybrida (Petunia)).